A 696-amino-acid polypeptide reads, in one-letter code: Elongation factor G 2 (696 aa).

The tr-type G domain maps to 5–281 (SKYRNIGIFA…AVVDYLPSPT (277 aa)). Residues 14–21 (AHVDAGKT), 78–82 (DTPGH), and 132–135 (NKLD) each bind GTP.

This sequence belongs to the TRAFAC class translation factor GTPase superfamily. Classic translation factor GTPase family. EF-G/EF-2 subfamily.

It is found in the cytoplasm. Catalyzes the GTP-dependent ribosomal translocation step during translation elongation. During this step, the ribosome changes from the pre-translocational (PRE) to the post-translocational (POST) state as the newly formed A-site-bound peptidyl-tRNA and P-site-bound deacylated tRNA move to the P and E sites, respectively. Catalyzes the coordinated movement of the two tRNA molecules, the mRNA and conformational changes in the ribosome. This is Elongation factor G 2 from Vibrio parahaemolyticus serotype O3:K6 (strain RIMD 2210633).